The sequence spans 400 residues: Argininosuccinate synthase (400 aa).

ATP contacts are provided by residues 10–18 (AYSGGVDTS) and Ala38. Tyr89 serves as a coordination point for L-citrulline. Gly119 contributes to the ATP binding site. L-aspartate contacts are provided by Thr121, Asn125, and Asp126. Asn125 is an L-citrulline binding site. Positions 129, 177, 262, and 274 each coordinate L-citrulline.

It belongs to the argininosuccinate synthase family. Type 1 subfamily. Homotetramer.

The protein localises to the cytoplasm. The catalysed reaction is L-citrulline + L-aspartate + ATP = 2-(N(omega)-L-arginino)succinate + AMP + diphosphate + H(+). It functions in the pathway amino-acid biosynthesis; L-arginine biosynthesis; L-arginine from L-ornithine and carbamoyl phosphate: step 2/3. The chain is Argininosuccinate synthase from Trichodesmium erythraeum (strain IMS101).